We begin with the raw amino-acid sequence, 179 residues long: Macro domain-containing protein XAC3343 (179 aa).

Positions 1–175 (MRIEVWQGDI…AYQQALATQE (175 aa)) constitute a Macro domain.

This sequence belongs to the MacroD-type family.

The sequence is that of Macro domain-containing protein XAC3343 from Xanthomonas axonopodis pv. citri (strain 306).